The primary structure comprises 144 residues: Large ribosomal subunit protein uL13 (144 aa).

Residues 125 to 144 are disordered; the sequence is YRGPEHPHQAQKPQPLEVKA.

This sequence belongs to the universal ribosomal protein uL13 family. As to quaternary structure, part of the 50S ribosomal subunit.

Its function is as follows. This protein is one of the early assembly proteins of the 50S ribosomal subunit, although it is not seen to bind rRNA by itself. It is important during the early stages of 50S assembly. The polypeptide is Large ribosomal subunit protein uL13 (Aquifex aeolicus (strain VF5)).